We begin with the raw amino-acid sequence, 177 residues long: ATP synthase subunit delta (177 aa).

This sequence belongs to the ATPase delta chain family. In terms of assembly, F-type ATPases have 2 components, F(1) - the catalytic core - and F(0) - the membrane proton channel. F(1) has five subunits: alpha(3), beta(3), gamma(1), delta(1), epsilon(1). F(0) has three main subunits: a(1), b(2) and c(10-14). The alpha and beta chains form an alternating ring which encloses part of the gamma chain. F(1) is attached to F(0) by a central stalk formed by the gamma and epsilon chains, while a peripheral stalk is formed by the delta and b chains.

It localises to the cell membrane. In terms of biological role, f(1)F(0) ATP synthase produces ATP from ADP in the presence of a proton or sodium gradient. F-type ATPases consist of two structural domains, F(1) containing the extramembraneous catalytic core and F(0) containing the membrane proton channel, linked together by a central stalk and a peripheral stalk. During catalysis, ATP synthesis in the catalytic domain of F(1) is coupled via a rotary mechanism of the central stalk subunits to proton translocation. Its function is as follows. This protein is part of the stalk that links CF(0) to CF(1). It either transmits conformational changes from CF(0) to CF(1) or is implicated in proton conduction. This is ATP synthase subunit delta from Streptococcus suis (strain 98HAH33).